The chain runs to 665 residues: DNA ligase (665 aa).

Residues 34 to 38 (DEEYD), 83 to 84 (SL), and glutamate 114 contribute to the NAD(+) site. Lysine 116 (N6-AMP-lysine intermediate) is an active-site residue. NAD(+) contacts are provided by arginine 137, glutamate 171, lysine 287, and lysine 311. Positions 405, 408, 424, and 429 each coordinate Zn(2+). The BRCT domain occupies 587 to 665 (KKSSKLAGLT…EDEFKKMIID (79 aa)).

The protein belongs to the NAD-dependent DNA ligase family. LigA subfamily. It depends on Mg(2+) as a cofactor. The cofactor is Mn(2+).

The catalysed reaction is NAD(+) + (deoxyribonucleotide)n-3'-hydroxyl + 5'-phospho-(deoxyribonucleotide)m = (deoxyribonucleotide)n+m + AMP + beta-nicotinamide D-nucleotide.. DNA ligase that catalyzes the formation of phosphodiester linkages between 5'-phosphoryl and 3'-hydroxyl groups in double-stranded DNA using NAD as a coenzyme and as the energy source for the reaction. It is essential for DNA replication and repair of damaged DNA. This chain is DNA ligase, found in Thermosipho africanus (strain TCF52B).